Reading from the N-terminus, the 823-residue chain is Ankyrin repeat domain-containing protein 20B (823 aa).

ANK repeat units lie at residues 32–65, 66–95, 99–128, 132–161, 165–194, and 198–227; these read SELQ…ARDK, QHRT…QIDI, ENRT…NPNL, YGNT…HIEA, DSNT…STHA, and LRRS…DVFA. Disordered stretches follow at residues 302 to 343 and 355 to 401; these read PEKV…GVED and VQTL…QLSE. Residues 372–382 show a composition bias toward basic and acidic residues; the sequence is QERHERSEKKQ. 3 coiled-coil regions span residues 431–480, 565–724, and 776–805; these read KKLK…KQLE, EMIT…NNST, and LVLE…EKAE.

In Homo sapiens (Human), this protein is Ankyrin repeat domain-containing protein 20B (ANKRD20A8P).